Here is a 459-residue protein sequence, read N- to C-terminus: tRNA-2-methylthio-N(6)-dimethylallyladenosine synthase (459 aa).

In terms of domain architecture, MTTase N-terminal spans 1-116; that stretch reads MRAHLITYGC…IGKALETNER (116 aa). [4Fe-4S] cluster contacts are provided by Cys10, Cys46, Cys79, Cys148, Cys152, and Cys155. In terms of domain architecture, Radical SAM core spans 134-367; sequence PQGKLQAHLT…IAKQKEWSAR (234 aa). A TRAM domain is found at 370-433; that stretch reads AAKVGTIQEV…PHMLYGRLIG (64 aa).

Belongs to the methylthiotransferase family. MiaB subfamily. As to quaternary structure, monomer. The cofactor is [4Fe-4S] cluster.

The protein localises to the cytoplasm. It catalyses the reaction N(6)-dimethylallyladenosine(37) in tRNA + (sulfur carrier)-SH + AH2 + 2 S-adenosyl-L-methionine = 2-methylsulfanyl-N(6)-dimethylallyladenosine(37) in tRNA + (sulfur carrier)-H + 5'-deoxyadenosine + L-methionine + A + S-adenosyl-L-homocysteine + 2 H(+). Its function is as follows. Catalyzes the methylthiolation of N6-(dimethylallyl)adenosine (i(6)A), leading to the formation of 2-methylthio-N6-(dimethylallyl)adenosine (ms(2)i(6)A) at position 37 in tRNAs that read codons beginning with uridine. This Deinococcus geothermalis (strain DSM 11300 / CIP 105573 / AG-3a) protein is tRNA-2-methylthio-N(6)-dimethylallyladenosine synthase.